The following is a 61-amino-acid chain: Metallothionein-2 (61 aa).

Met1 carries the N-acetylmethionine modification. Residues 1–29 (MDPNCSCTAGESCTCAGSCKCKDCKCASC) are beta. A divalent metal cation-binding residues include Cys5, Cys7, Cys13, Cys15, Cys19, Cys21, Cys24, Cys26, Cys29, Cys33, Cys34, Cys36, Cys37, Cys41, Cys44, Cys48, Cys50, and Cys57. The tract at residues 30–61 (KKSCCSCCPVGCAKCAQGCVCKGASDKCSCCA) is alpha. Residue Ser58 is modified to Phosphoserine. Residues Cys59 and Cys60 each coordinate a divalent metal cation.

Belongs to the metallothionein superfamily. Type 1 family. Interacts with EOLA1.

Functionally, metallothioneins have a high content of cysteine residues that bind various heavy metals; these proteins are transcriptionally regulated by both heavy metals and glucocorticoids. This Ovis aries (Sheep) protein is Metallothionein-2 (MT2A).